The chain runs to 215 residues: Urease accessory protein UreG (215 aa).

24–31 (GPVGSGKT) provides a ligand contact to GTP.

The protein belongs to the SIMIBI class G3E GTPase family. UreG subfamily. In terms of assembly, homodimer. UreD, UreF and UreG form a complex that acts as a GTP-hydrolysis-dependent molecular chaperone, activating the urease apoprotein by helping to assemble the nickel containing metallocenter of UreC. The UreE protein probably delivers the nickel.

The protein resides in the cytoplasm. Functionally, facilitates the functional incorporation of the urease nickel metallocenter. This process requires GTP hydrolysis, probably effectuated by UreG. The polypeptide is Urease accessory protein UreG (Burkholderia cenocepacia (strain HI2424)).